Here is a 103-residue protein sequence, read N- to C-terminus: Mitochondrial import inner membrane translocase subunit Tim10 B (103 aa).

The Twin CX3C motif motif lies at 28–52; it reads CFQRCVPSLHHRALDAEEEACLHSC. Intrachain disulfides connect Cys28–Cys52 and Cys32–Cys48.

The protein belongs to the small Tim family. In terms of assembly, component of the TIM22 complex, which core is composed of TIMM22, associated with TIMM10 (TIMM10A and/or TIMM10B), TIMM9, AGK and TIMM29. Ubiquitous, with highest expression in heart, kidney, liver and skeletal muscle.

The protein resides in the mitochondrion inner membrane. In terms of biological role, component of the TIM22 complex, a complex that mediates the import and insertion of multi-pass transmembrane proteins into the mitochondrial inner membrane. The TIM22 complex forms a twin-pore translocase that uses the membrane potential as the external driving force. In the TIM22 complex, it may act as a docking point for the soluble 70 kDa complex that guides the target proteins in transit through the aqueous mitochondrial intermembrane space. This is Mitochondrial import inner membrane translocase subunit Tim10 B (TIMM10B) from Homo sapiens (Human).